Reading from the N-terminus, the 426-residue chain is Serine hydroxymethyltransferase (426 aa).

(6S)-5,6,7,8-tetrahydrofolate is bound by residues Leu113 and 117–119 (GHL). An N6-(pyridoxal phosphate)lysine modification is found at Lys222. A (6S)-5,6,7,8-tetrahydrofolate-binding site is contributed by 363 to 365 (SAF).

This sequence belongs to the SHMT family. Homodimer. Pyridoxal 5'-phosphate serves as cofactor.

Its subcellular location is the cytoplasm. It catalyses the reaction (6R)-5,10-methylene-5,6,7,8-tetrahydrofolate + glycine + H2O = (6S)-5,6,7,8-tetrahydrofolate + L-serine. Its pathway is one-carbon metabolism; tetrahydrofolate interconversion. It functions in the pathway amino-acid biosynthesis; glycine biosynthesis; glycine from L-serine: step 1/1. Functionally, catalyzes the reversible interconversion of serine and glycine with tetrahydrofolate (THF) serving as the one-carbon carrier. This reaction serves as the major source of one-carbon groups required for the biosynthesis of purines, thymidylate, methionine, and other important biomolecules. Also exhibits THF-independent aldolase activity toward beta-hydroxyamino acids, producing glycine and aldehydes, via a retro-aldol mechanism. This Porphyromonas gingivalis (strain ATCC 33277 / DSM 20709 / CIP 103683 / JCM 12257 / NCTC 11834 / 2561) protein is Serine hydroxymethyltransferase.